Reading from the N-terminus, the 365-residue chain is Putative agmatine deiminase (365 aa).

Cys357 acts as the Amidino-cysteine intermediate in catalysis.

Belongs to the agmatine deiminase family.

It catalyses the reaction agmatine + H2O = N-carbamoylputrescine + NH4(+). This is Putative agmatine deiminase from Yersinia pseudotuberculosis serotype O:1b (strain IP 31758).